The chain runs to 610 residues: Dopamine beta-hydroxylase (610 aa).

The Cytoplasmic portion of the chain corresponds to 1–9 (MQVPSPSVR). The helical; Signal-anchor for type II membrane protein transmembrane segment at 10-30 (EAASMYGTAVAVFLVILVAAL) threads the bilayer. The Intragranular segment spans residues 31–610 (QGSAPAESPF…TVLNISGGKG (580 aa)). A DOMON domain is found at 50 to 166 (GTLELSWNIS…GTVHLVYGFL (117 aa)). 6 disulfides stabilise this stretch: cysteine 147-cysteine 589, cysteine 225-cysteine 276, cysteine 262-cysteine 288, cysteine 383-cysteine 496, cysteine 387-cysteine 558, and cysteine 459-cysteine 481. N-linked (GlcNAc...) asparagine glycosylation occurs at asparagine 177. Residue tyrosine 223 is part of the active site. 2 residues coordinate Cu(2+): histidine 255 and histidine 256. 4 residues coordinate Cu(2+): histidine 326, histidine 405, histidine 407, and methionine 480. Residue histidine 405 is part of the active site. Asparagine 559 is a glycosylation site (N-linked (GlcNAc...) asparagine). The tract at residues 585-610 (PTPHCPASQAQSPAGPTVLNISGGKG) is disordered.

This sequence belongs to the copper type II ascorbate-dependent monooxygenase family. Homotetramer; composed of two disulfide-linked dimers. The cofactor is Cu(2+). Post-translationally, proteolytic cleavage after the membrane-anchor leads to the release of the soluble form. In terms of processing, N-glycosylated. In terms of tissue distribution, detected in chromaffin granules in the adrenal medulla (at protein level). Detected in adrenal medulla.

It is found in the cytoplasmic vesicle. It localises to the secretory vesicle lumen. The protein localises to the secretory vesicle. Its subcellular location is the chromaffin granule lumen. The protein resides in the secretory vesicle membrane. It is found in the chromaffin granule membrane. It catalyses the reaction dopamine + 2 L-ascorbate + O2 = (R)-noradrenaline + 2 monodehydro-L-ascorbate radical + H2O. Its pathway is catecholamine biosynthesis; (R)-noradrenaline biosynthesis; (R)-noradrenaline from dopamine: step 1/1. Functionally, catalyzes the hydroxylation of dopamine to noradrenaline (also known as norepinephrine), and is thus vital for regulation of these neurotransmitters. This Bos taurus (Bovine) protein is Dopamine beta-hydroxylase (DBH).